A 433-amino-acid polypeptide reads, in one-letter code: uncharacterized protein (433 aa).

A coiled-coil region spans residues lysine 258 to threonine 304.

Belongs to the mimivirus R160 family.

Its subcellular location is the virion. This is an uncharacterized protein from Acanthamoeba polyphaga mimivirus (APMV).